The chain runs to 179 residues: MAKLHDKYQETVSPELVKKFGFTSVMQVPRIEKITLNMGVGEAVADKKVMEHALRDMTAIAGQKPVVTVARKSVAGFKIREGYPIGCKVTLRGERMWEFLERLVDIAIPRIRDFRGMSVKSFDGRGNYAMGVREQIIFPEIEYDKIDKIRGMDIVITTSAKNDEEGRALLEGFNFPFKK.

The protein belongs to the universal ribosomal protein uL5 family. As to quaternary structure, part of the 50S ribosomal subunit; part of the 5S rRNA/L5/L18/L25 subcomplex. Contacts the 5S rRNA and the P site tRNA. Forms a bridge to the 30S subunit in the 70S ribosome.

In terms of biological role, this is one of the proteins that bind and probably mediate the attachment of the 5S RNA into the large ribosomal subunit, where it forms part of the central protuberance. In the 70S ribosome it contacts protein S13 of the 30S subunit (bridge B1b), connecting the 2 subunits; this bridge is implicated in subunit movement. Contacts the P site tRNA; the 5S rRNA and some of its associated proteins might help stabilize positioning of ribosome-bound tRNAs. The sequence is that of Large ribosomal subunit protein uL5 from Shewanella piezotolerans (strain WP3 / JCM 13877).